The primary structure comprises 106 residues: Large ribosomal subunit protein uL23 (106 aa).

The protein belongs to the universal ribosomal protein uL23 family. As to quaternary structure, part of the 50S ribosomal subunit. Contacts protein L29, and trigger factor when it is bound to the ribosome.

In terms of biological role, one of the early assembly proteins it binds 23S rRNA. One of the proteins that surrounds the polypeptide exit tunnel on the outside of the ribosome. Forms the main docking site for trigger factor binding to the ribosome. The chain is Large ribosomal subunit protein uL23 from Neisseria meningitidis serogroup C / serotype 2a (strain ATCC 700532 / DSM 15464 / FAM18).